The chain runs to 111 residues: C-X-C motif chemokine 14 (111 aa).

A signal peptide spans 1–34 (MSLLPRRAPPVSMRLLAAALLLLLLALYTARVDG). 2 cysteine pairs are disulfide-bonded: Cys37–Cys63 and Cys39–Cys84. The short motif at 67–81 (MVIITTKSVSRYRGQ) is the D-box element.

The protein belongs to the intercrine alpha (chemokine CxC) family. Post-translationally, ubiquitinated, followed by degradation by the proteasome. In terms of tissue distribution, expressed in heart, brain, placenta, lung, liver, skeletal muscle, kidney and pancreas. Highly expressed in normal tissue without inflammatory stimuli and infrequently expressed in cancer cell lines. Weakly expressed in monocyte-derived dendritic cells. Not detected in lung or unstimulated peripheral blood lymphocytes.

It is found in the secreted. Functionally, potent chemoattractant for neutrophils, and weaker for dendritic cells. Not chemotactic for T-cells, B-cells, monocytes, natural killer cells or granulocytes. Does not inhibit proliferation of myeloid progenitors in colony formation assays. The polypeptide is C-X-C motif chemokine 14 (CXCL14) (Homo sapiens (Human)).